A 633-amino-acid chain; its full sequence is ABC transporter G family member 1 (633 aa).

Residues 23–265 form the ABC transporter domain; that stretch reads LTWEDLWVTA…FALSGFPCPT (243 aa). Residue 60–67 participates in ATP binding; that stretch reads GPSGSGKS. An ABC transmembrane type-2 domain is found at 340-552; that stretch reads TQSLVLTRRS…AYEGMFKNEF (213 aa). N352 carries an N-linked (GlcNAc...) asparagine glycan. The next 6 membrane-spanning stretches (helical) occupy residues 364–384, 394–414, 440–460, 470–490, 498–518, and 580–600; these read LAVY…VGFS, MLMF…PSFV, LSAM…AYFM, FIYF…LMMI, FLMG…SGGF, and IDLV…LLVV.

The protein belongs to the ABC transporter superfamily. ABCG family. In terms of assembly, homodimer. In terms of tissue distribution, restricted to the petals, with the highest expression in the limb and, to a lesser extent, in petal tubes, probably in both epidermal and mesophyll cell layers.

It localises to the cell membrane. Functionally, ABC transporter controlling the release of volatile organic compounds (VOCs), including floral volatile benzenoids and phenylpropanoids (FVBP), in flowers of fragrant cultivars (e.g. cv. Mitchell and cv. V26). This scent, mostly produced in the evening and night by the petals, attracts the pollinators (e.g. the night-active hawkmoth pollinator Manduca sexta). In Petunia hybrida (Petunia), this protein is ABC transporter G family member 1.